The chain runs to 450 residues: MEQDKYLTVAAITKYIEKKFEVDPYMKQVFVRGEISNLKQPASGHLYFTVKDEFAMLRSVMFHKAVQKIGFVPEDGMNVLVTGRIGVFTKAGRYQFYAEHMEPDGVGALYIQLEQLKAQLEKEGLFAETHKKVLPSFPSKVAVVTSKTGAAVRDILTTIHRRMPSVEVIVYPTIVQGEKAAQKIVENIGKINQRNDIDVMIIGRGGGSLEELWAFNEEPVVRAVYDSDVPVISAVGHETDFALSDFSADVRAATPTAAAELAVPDYRDLEERLAERKYRLLAVTRQALERKERSLEQLKQHLILNGPKHQLEQQMERTDYFSERLNNAFSKQIFVKQTAFDRLNDRLHYYHPNKEIELQKEQMTLHLQALDKAMKQLLKDKQQSFFRQVDALEHLSPLSLLKRGFGVTYKENTLVKSVQELEVGDNIQVKMQGGHIDALITAKEEDISGN.

This sequence belongs to the XseA family. As to quaternary structure, heterooligomer composed of large and small subunits.

It is found in the cytoplasm. It carries out the reaction Exonucleolytic cleavage in either 5'- to 3'- or 3'- to 5'-direction to yield nucleoside 5'-phosphates.. Functionally, bidirectionally degrades single-stranded DNA into large acid-insoluble oligonucleotides, which are then degraded further into small acid-soluble oligonucleotides. This Listeria monocytogenes serovar 1/2a (strain ATCC BAA-679 / EGD-e) protein is Exodeoxyribonuclease 7 large subunit.